The primary structure comprises 687 residues: Putative metabolite transport protein YDL199C (687 aa).

Positions 1–22 (MKPPLNMSRSNKPLTQEANSSA) are disordered. Residues 1–122 (MKPPLNMSRS…RHSSRVLRTS (122 aa)) lie on the Extracellular side of the membrane. Polar residues predominate over residues 7 to 22 (MSRSNKPLTQEANSSA). Residue Ser-90 is modified to Phosphoserine. The helical transmembrane segment at 123–143 (FISFVVLVSSLSGLDQGLISG) threads the bilayer. The Cytoplasmic portion of the chain corresponds to 144 to 164 (NVMTLSFQKYFHYPLTSPLGN). A helical transmembrane segment spans residues 165-185 (IVSIVNLGAFMASLFVYSGIL). Residues 186–192 (EPCSRKK) lie on the Extracellular side of the membrane. Residues 193–213 (MLQISTMIYSLGAIVQVLALN) form a helical membrane-spanning segment. Residues 214–216 (QWC) are Cytoplasmic-facing. A helical transmembrane segment spans residues 217 to 237 (LLLGRFLLGVGMGFAFSMVII). Over 238-251 (YQFEFPLPCIRKRT) the chain is Extracellular. A helical transmembrane segment spans residues 252–272 (LISIQCVSSVIAYSFGIWINC). The Cytoplasmic segment spans residues 273–283 (AFRYLGFAWRY). A helical membrane pass occupies residues 284–304 (PLSTHVALGIILNLMSFYLIL). Residues 305-410 (ESPSWLLKQK…MGRGERKSIY (106 aa)) lie on the Extracellular side of the membrane. A helical membrane pass occupies residues 411–431 (LTGLNALIYSIVILAYVPLVL). At 432-439 (RKRKEKTN) the chain is on the cytoplasmic side. The chain crosses the membrane as a helical span at residues 440-460 (VLLGSIVMCALLFTISFTDWF). Over 461 to 469 (PKSTTRYIS) the chain is Extracellular. The chain crosses the membrane as a helical span at residues 470-490 (ILFAVFLFTHFISWDSIGWVM). Over 491–500 (TIELLPHLSQ) the chain is Cytoplasmic. A helical membrane pass occupies residues 501-521 (APVILLVSNFYWIFKWFVSLI). The Extracellular portion of the chain corresponds to 522 to 533 (TPILIDRLSWKF). Residues 534-554 (YLIPSLSSFISIIFVLKIFPI) form a helical membrane-spanning segment. The Cytoplasmic portion of the chain corresponds to 555–687 (ETRDERLDSD…QNSPGDMAVA (133 aa)). 2 disordered regions span residues 561-587 (LDSDDDSTGNGSGNHDDVFDDTGSEFS) and 654-687 (SFHNRTDPNISDNIAANKPSSGGGQNSPGDMAVA). Residues 660–673 (DPNISDNIAANKPS) show a composition bias toward polar residues.

The protein belongs to the major facilitator superfamily. Sugar transporter (TC 2.A.1.1) family.

The protein resides in the membrane. This Saccharomyces cerevisiae (strain ATCC 204508 / S288c) (Baker's yeast) protein is Putative metabolite transport protein YDL199C.